We begin with the raw amino-acid sequence, 392 residues long: ESX-1 secretion-associated protein EspA (392 aa).

The disordered stretch occupies residues 302-392; the sequence is TRQALRPRAD…GQKVLVRNVV (91 aa). Gly residues predominate over residues 334 to 344; it reads QGMGGPVGMGG.

Homodimer; disulfide-linked. An artificial EsxB-EsxA heterodimer interacts with EspA.

The protein localises to the secreted. In terms of biological role, required for secretion of EsxA (ESAT-6) and EsxB (CFP-10) and for virulence. Involved in translocation of bacteria from the host (human) phagolysosome to the host cytoplasm. The chain is ESX-1 secretion-associated protein EspA from Mycobacterium tuberculosis (strain ATCC 25618 / H37Rv).